Consider the following 243-residue polypeptide: Carboxy-S-adenosyl-L-methionine synthase (243 aa).

S-adenosyl-L-methionine is bound by residues Y40, 65-67 (GCS), 90-91 (DN), 118-119 (DI), N133, and R200.

This sequence belongs to the class I-like SAM-binding methyltransferase superfamily. Cx-SAM synthase family. Homodimer.

The enzyme catalyses prephenate + S-adenosyl-L-methionine = carboxy-S-adenosyl-L-methionine + 3-phenylpyruvate + H2O. Functionally, catalyzes the conversion of S-adenosyl-L-methionine (SAM) to carboxy-S-adenosyl-L-methionine (Cx-SAM). In Shewanella baltica (strain OS155 / ATCC BAA-1091), this protein is Carboxy-S-adenosyl-L-methionine synthase.